The primary structure comprises 599 residues: NADH-quinone oxidoreductase subunit C/D (599 aa).

A compositionally biased stretch (polar residues) spans 1–15; that stretch reads MTDLTAQELAQPSWQ. The disordered stretch occupies residues 1–21; that stretch reads MTDLTAQELAQPSWQTRDHQD. Positions 1 to 189 are NADH dehydrogenase I subunit C; that stretch reads MTDLTAQELA…DPFELTKQKE (189 aa). The interval 213–599 is NADH dehydrogenase I subunit D; that stretch reads DFMFLNLGPN…IDFVMSDVDR (387 aa).

This sequence in the N-terminal section; belongs to the complex I 30 kDa subunit family. The protein in the C-terminal section; belongs to the complex I 49 kDa subunit family. NDH-1 is composed of 13 different subunits. Subunits NuoB, CD, E, F, and G constitute the peripheral sector of the complex.

It localises to the cell inner membrane. It carries out the reaction a quinone + NADH + 5 H(+)(in) = a quinol + NAD(+) + 4 H(+)(out). Functionally, NDH-1 shuttles electrons from NADH, via FMN and iron-sulfur (Fe-S) centers, to quinones in the respiratory chain. The immediate electron acceptor for the enzyme in this species is believed to be ubiquinone. Couples the redox reaction to proton translocation (for every two electrons transferred, four hydrogen ions are translocated across the cytoplasmic membrane), and thus conserves the redox energy in a proton gradient. In Erwinia tasmaniensis (strain DSM 17950 / CFBP 7177 / CIP 109463 / NCPPB 4357 / Et1/99), this protein is NADH-quinone oxidoreductase subunit C/D.